A 206-amino-acid chain; its full sequence is Thymidylate kinase (206 aa).

Position 7 to 14 (G7 to S14) interacts with ATP.

It belongs to the thymidylate kinase family.

It carries out the reaction dTMP + ATP = dTDP + ADP. Its function is as follows. Phosphorylation of dTMP to form dTDP in both de novo and salvage pathways of dTTP synthesis. The protein is Thymidylate kinase (tmk) of Chlamydia pneumoniae (Chlamydophila pneumoniae).